The primary structure comprises 32 residues: Conotoxin sr7a (32 aa).

3 disulfide bridges follow: cysteine 1/cysteine 17, cysteine 8/cysteine 21, and cysteine 16/cysteine 31. Serine 32 is subject to Serine amide.

In terms of tissue distribution, expressed by the venom duct.

Its subcellular location is the secreted. Elicits hyperactivity when injected intracranially into mice and produces paralysis when injected into the pedal muscle of freshwater snails, Pomacea paludosa, but it has no apparent effect after intramuscular injection into the limpet Patella opea or the freshwater fish Lebistes reticulatus. This Conus spurius (Alphabet cone) protein is Conotoxin sr7a.